The sequence spans 191 residues: Transposon Tn1546 resolvase (191 aa).

The Resolvase/invertase-type recombinase catalytic domain occupies 2–138 (RKIGYIRVSS…EGIELAKKEG (137 aa)). S10 (O-(5'-phospho-DNA)-serine intermediate) is an active-site residue. Residues 168-187 (VNQICEITNVSRASLYRKLS) constitute a DNA-binding region (H-T-H motif).

It belongs to the site-specific recombinase resolvase family.

Functionally, resolvase catalyzes the resolution (a site-specific recombination) of the cointegrated replicon to yield the final transposition products. The polypeptide is Transposon Tn1546 resolvase (Enterococcus faecium (Streptococcus faecium)).